Here is a 664-residue protein sequence, read N- to C-terminus: Macoilin-1 (664 aa).

A run of 4 helical transmembrane segments spans residues 28 to 48, 75 to 95, 120 to 140, and 154 to 174; these read TFLY…DFVL, AFSV…LLFI, VCLP…AIRF, and FAAH…KSYV. Residues 206–225 form a disordered region; sequence QMLQRQERETEEATSKGMSE. Positions 210-219 are enriched in basic and acidic residues; sequence RQERETEEAT. N-linked (GlcNAc...) asparagine glycans are attached at residues Asn-234, Asn-336, Asn-339, Asn-348, and Asn-655. 2 disordered regions span residues 315-364 and 644-664; these read VGAG…LAPH and FMDT…PLKK. The segment covering 334-348 has biased composition (low complexity); the sequence is SHNSTNGSVPSSSSN. Residues 644–658 are compositionally biased toward polar residues; sequence FMDTSPSSLDPNASV.

This sequence belongs to the macoilin family.

It is found in the nucleus membrane. The protein localises to the rough endoplasmic reticulum membrane. Its function is as follows. May play a role in the regulation of neuronal activity. This is Macoilin-1 from Danio rerio (Zebrafish).